A 149-amino-acid chain; its full sequence is Large ribosomal subunit protein bL20m (149 aa).

Residues 1–9 constitute a mitochondrion transit peptide; sequence MVFLTAQLW.

Belongs to the bacterial ribosomal protein bL20 family. In terms of assembly, component of the mitochondrial large ribosomal subunit (mt-LSU). Mature mammalian 55S mitochondrial ribosomes consist of a small (28S) and a large (39S) subunit. The 28S small subunit contains a 12S ribosomal RNA (12S mt-rRNA) and 30 different proteins. The 39S large subunit contains a 16S rRNA (16S mt-rRNA), a copy of mitochondrial valine transfer RNA (mt-tRNA(Val)), which plays an integral structural role, and 52 different proteins. Interacts with OXA1L.

Its subcellular location is the mitochondrion. The polypeptide is Large ribosomal subunit protein bL20m (MRPL20) (Homo sapiens (Human)).